A 51-amino-acid chain; its full sequence is Large ribosomal subunit protein eL39 (51 aa).

This sequence belongs to the eukaryotic ribosomal protein eL39 family.

This Methanopyrus kandleri (strain AV19 / DSM 6324 / JCM 9639 / NBRC 100938) protein is Large ribosomal subunit protein eL39.